The following is a 252-amino-acid chain: Sororin (252 aa).

2 disordered regions span residues M1–T48 and A72–V142. Residues S21, S33, S35, S75, S79, and S83 each carry the phosphoserine modification. The span at L86–K104 shows a compositional bias: basic and acidic residues. Residues K88 to N90 carry the KEN box motif. T98 bears the Phosphothreonine mark. The span at T105–P116 shows a compositional bias: low complexity. Residue S107 is modified to Phosphoserine. 2 positions are modified to phosphothreonine: T111 and T115. Residues S124–K140 are compositionally biased toward basic and acidic residues. At S154 the chain carries Phosphoserine. T159 is modified (phosphothreonine). Positions F166 to F168 match the FGF motif motif. Residues W199–M222 form a disordered region. S209 carries the post-translational modification Phosphoserine. Residues L230–E252 are C-terminal Sororin domain.

The protein belongs to the sororin family. In terms of assembly, interacts with the APC/C complex. Interacts with the chromatin-bound cohesin complex; the interaction is indirect, occurs after DNA replication and requires acetylation of the cohesin component SMC3. Interacts (via the FGF motif) with PDS5A and PDS5B; the interaction is direct and prevents the interaction of PDS5A with WAPL. In terms of processing, phosphorylated. Phosphorylation, as cells enter mitosis, disrupts the interaction with PDS5A and relieves the inhibition of WAPL by CDCA5. Post-translationally, ubiquitinated by the APC/C complex in G1, leading to its degradation.

It localises to the nucleus. The protein localises to the chromosome. It is found in the cytoplasm. Regulator of sister chromatid cohesion in mitosis stabilizing cohesin complex association with chromatin. May antagonize the action of WAPL which stimulates cohesin dissociation from chromatin. Cohesion ensures that chromosome partitioning is accurate in both meiotic and mitotic cells and plays an important role in DNA repair. Required for efficient DNA double-stranded break repair. The sequence is that of Sororin (CDCA5) from Homo sapiens (Human).